Consider the following 279-residue polypeptide: Troponin T, fast skeletal muscle (279 aa).

Residues 1–21 (MSDEEVEHVEEQYEEEEEAQE) show a composition bias toward acidic residues. A disordered region spans residues 1–82 (MSDEEVEHVE…EKVDFDDIQK (82 aa)). At Ser2 the chain carries N-acetylserine. The residue at position 2 (Ser2) is a Phosphoserine. 2 stretches are compositionally biased toward basic and acidic residues: residues 28-49 (EVHEPAPEVHVPEEVHEDALED) and 70-82 (PEGEKVDFDDIQK). A Phosphoserine modification is found at Ser98. Over residues 121-163 (RAERAEQQRIRAEKERERQNRLAEEKARREEEDAKRRAEEDLK) the composition is skewed to basic and acidic residues. The disordered stretch occupies residues 121 to 200 (RAERAEQQRI…TAREMKKKIL (80 aa)). Phosphoserine occurs at positions 169, 176, and 177. Positions 191-200 (TAREMKKKIL) are enriched in basic and acidic residues. A Phosphoserine modification is found at Ser213. Tyr229 carries the post-translational modification Phosphotyrosine.

The protein belongs to the troponin T family.

Its function is as follows. Troponin T is the tropomyosin-binding subunit of troponin, the thin filament regulatory complex which confers calcium-sensitivity to striated muscle actomyosin ATPase activity. This is Troponin T, fast skeletal muscle (TNNT3) from Oryctolagus cuniculus (Rabbit).